The sequence spans 125 residues: Aspartate 1-decarboxylase (125 aa).

The active-site Schiff-base intermediate with substrate; via pyruvic acid is Ser-25. Ser-25 bears the Pyruvic acid (Ser) mark. Residue Thr-57 coordinates substrate. The Proton donor role is filled by Tyr-58. Position 73-75 (73-75) interacts with substrate; the sequence is GAA.

This sequence belongs to the PanD family. Heterooctamer of four alpha and four beta subunits. Requires pyruvate as cofactor. Is synthesized initially as an inactive proenzyme, which is activated by self-cleavage at a specific serine bond to produce a beta-subunit with a hydroxyl group at its C-terminus and an alpha-subunit with a pyruvoyl group at its N-terminus.

It is found in the cytoplasm. The enzyme catalyses L-aspartate + H(+) = beta-alanine + CO2. The protein operates within cofactor biosynthesis; (R)-pantothenate biosynthesis; beta-alanine from L-aspartate: step 1/1. In terms of biological role, catalyzes the pyruvoyl-dependent decarboxylation of aspartate to produce beta-alanine. In Herpetosiphon aurantiacus (strain ATCC 23779 / DSM 785 / 114-95), this protein is Aspartate 1-decarboxylase.